Reading from the N-terminus, the 359-residue chain is Peptide chain release factor 1 (359 aa).

Gln-236 carries the N5-methylglutamine modification.

The protein belongs to the prokaryotic/mitochondrial release factor family. Post-translationally, methylated by PrmC. Methylation increases the termination efficiency of RF1.

It is found in the cytoplasm. Functionally, peptide chain release factor 1 directs the termination of translation in response to the peptide chain termination codons UAG and UAA. The protein is Peptide chain release factor 1 of Streptococcus pyogenes serotype M1.